A 384-amino-acid chain; its full sequence is Queuine tRNA-ribosyltransferase (384 aa).

Asp93 serves as the catalytic Proton acceptor. Substrate-binding positions include 93–97 (DSGGF), Asp147, Gln202, and Gly229. Positions 260–266 (GVGYPEE) are RNA binding. The active-site Nucleophile is Asp279. Positions 284 to 288 (TRAAR) are RNA binding; important for wobble base 34 recognition. The Zn(2+) site is built by Cys317, Cys319, Cys322, and His348.

The protein belongs to the queuine tRNA-ribosyltransferase family. As to quaternary structure, homodimer. Within each dimer, one monomer is responsible for RNA recognition and catalysis, while the other monomer binds to the replacement base PreQ1. The cofactor is Zn(2+).

It catalyses the reaction 7-aminomethyl-7-carbaguanine + guanosine(34) in tRNA = 7-aminomethyl-7-carbaguanosine(34) in tRNA + guanine. The protein operates within tRNA modification; tRNA-queuosine biosynthesis. In terms of biological role, catalyzes the base-exchange of a guanine (G) residue with the queuine precursor 7-aminomethyl-7-deazaguanine (PreQ1) at position 34 (anticodon wobble position) in tRNAs with GU(N) anticodons (tRNA-Asp, -Asn, -His and -Tyr). Catalysis occurs through a double-displacement mechanism. The nucleophile active site attacks the C1' of nucleotide 34 to detach the guanine base from the RNA, forming a covalent enzyme-RNA intermediate. The proton acceptor active site deprotonates the incoming PreQ1, allowing a nucleophilic attack on the C1' of the ribose to form the product. After dissociation, two additional enzymatic reactions on the tRNA convert PreQ1 to queuine (Q), resulting in the hypermodified nucleoside queuosine (7-(((4,5-cis-dihydroxy-2-cyclopenten-1-yl)amino)methyl)-7-deazaguanosine). This Koribacter versatilis (strain Ellin345) protein is Queuine tRNA-ribosyltransferase.